The primary structure comprises 336 residues: F-box protein At5g50450 (336 aa).

The F-box domain maps to 19–70 (NNHFEDLHDDLIISILRKLATSASSPSDFLTVLSTCKRLNRLGLHPLVLSKA). The Zn(2+) site is built by H263, C266, C279, C282, C288, C292, H301, and C305. Residues 263–305 (HGGCGRPETRAHEFRRCSVCGKVNYCSRGCQALDWRAKHKVEC) form an MYND-type; atypical zinc finger.

The polypeptide is F-box protein At5g50450 (Arabidopsis thaliana (Mouse-ear cress)).